We begin with the raw amino-acid sequence, 435 residues long: Putative GMP synthase [glutamine-hydrolyzing] 2 (435 aa).

One can recognise a Glutamine amidotransferase type-1; truncated domain in the interval 1–120; sequence MKQDMIVILD…VFDTCQAEAN (120 aa). In terms of domain architecture, GMPS ATP-PPase spans 121–310; sequence WNMANFVNDQ…LGLPYEMVYR (190 aa). Residue 148–154 coordinates ATP; sequence SGGVDSS.

Homodimer.

It catalyses the reaction XMP + L-glutamine + ATP + H2O = GMP + L-glutamate + AMP + diphosphate + 2 H(+). Its pathway is purine metabolism; GMP biosynthesis; GMP from XMP (L-Gln route): step 1/1. Functionally, catalyzes the synthesis of GMP from XMP. This chain is Putative GMP synthase [glutamine-hydrolyzing] 2 (guaA2), found in Bacteroides thetaiotaomicron (strain ATCC 29148 / DSM 2079 / JCM 5827 / CCUG 10774 / NCTC 10582 / VPI-5482 / E50).